A 225-amino-acid polypeptide reads, in one-letter code: Red fluorescent protein drFP583 (225 aa).

Residues 66-68 (QYG) constitute a cross-link (2-iminomethyl-5-imidazolinone (Gln-Gly)). A (Z)-2,3-didehydrotyrosine modification is found at Y67.

The protein belongs to the GFP family. Homotetramer. Post-translationally, contains a chromophore consisting of modified amino acid residues. The chromophore is formed by autocatalytic backbone condensation between Xaa-N and Gly-(N+2), oxidation of Tyr-(N+1) to didehydrotyrosine, and formation of a double bond to the alpha-amino nitrogen of residue Xaa-N. Maturation of the chromophore requires nothing other than molecular oxygen.

Functionally, thought to play a role in photoprotection of the coral's resident symbiont microalgae's photosystems from photoinhibition caused by high light levels found near the surface of coral reefs. In deeper water, the fluorescence may be to convert blue light into longer wavelengths more suitable for use in photosynthesis by the microalgal symbionts. This is Red fluorescent protein drFP583 from Discosoma sp. (Sea anemone).